Reading from the N-terminus, the 247-residue chain is Probable phosphatase swp_1620 (247 aa).

Zn(2+) contacts are provided by His8, His10, His16, His41, Glu74, His102, His132, Asp193, and His195.

It belongs to the PHP family. It depends on Zn(2+) as a cofactor.

This chain is Probable phosphatase swp_1620, found in Shewanella piezotolerans (strain WP3 / JCM 13877).